The primary structure comprises 211 residues: Endonuclease III (211 aa).

A HhH domain is found at 111–130 (AHALESLPGVGHKTANVVLN). Residues Cys-190, Cys-197, Cys-200, and Cys-206 each coordinate [4Fe-4S] cluster.

It belongs to the Nth/MutY family. [4Fe-4S] cluster is required as a cofactor.

The enzyme catalyses 2'-deoxyribonucleotide-(2'-deoxyribose 5'-phosphate)-2'-deoxyribonucleotide-DNA = a 3'-end 2'-deoxyribonucleotide-(2,3-dehydro-2,3-deoxyribose 5'-phosphate)-DNA + a 5'-end 5'-phospho-2'-deoxyribonucleoside-DNA + H(+). Its function is as follows. DNA repair enzyme that has both DNA N-glycosylase activity and AP-lyase activity. The DNA N-glycosylase activity releases various damaged pyrimidines from DNA by cleaving the N-glycosidic bond, leaving an AP (apurinic/apyrimidinic) site. The AP-lyase activity cleaves the phosphodiester bond 3' to the AP site by a beta-elimination, leaving a 3'-terminal unsaturated sugar and a product with a terminal 5'-phosphate. This chain is Endonuclease III, found in Treponema pallidum (strain Nichols).